We begin with the raw amino-acid sequence, 468 residues long: Citrate synthase, mitochondrial (468 aa).

Residues 1–30 constitute a mitochondrion transit peptide; sequence MSFLSISRLAPRLLSSKNAACVVVAARNAS. Catalysis depends on residues His-303 and His-349. Arg-358 is a binding site for oxaloacetate. Asp-404 is a catalytic residue. Residues Arg-430 and Arg-450 each contribute to the oxaloacetate site.

This sequence belongs to the citrate synthase family. In terms of assembly, homodimer.

The protein resides in the mitochondrion matrix. It catalyses the reaction oxaloacetate + acetyl-CoA + H2O = citrate + CoA + H(+). Its pathway is carbohydrate metabolism; tricarboxylic acid cycle; isocitrate from oxaloacetate: step 1/2. Functionally, key enzyme of the Krebs tricarboxylic acid cycle which catalyzes the synthesis of citrate from acetyl coenzyme A and oxaloacetate. The chain is Citrate synthase, mitochondrial (cs) from Danio rerio (Zebrafish).